A 236-amino-acid chain; its full sequence is ATP-dependent dethiobiotin synthetase BioD (236 aa).

Thr19 contacts Mg(2+). Lys40 is a catalytic residue. Residues Asp61 and Glu122 each contribute to the Mg(2+) site. Residues Asp61, 122–125 (EGVG), 182–183 (NT), and 211–213 (PRL) each bind ATP.

The protein belongs to the dethiobiotin synthetase family. As to quaternary structure, homodimer. Requires Mg(2+) as cofactor.

The protein localises to the cytoplasm. The catalysed reaction is (7R,8S)-7,8-diammoniononanoate + CO2 + ATP = (4R,5S)-dethiobiotin + ADP + phosphate + 3 H(+). It participates in cofactor biosynthesis; biotin biosynthesis; biotin from 7,8-diaminononanoate: step 1/2. Its function is as follows. Catalyzes a mechanistically unusual reaction, the ATP-dependent insertion of CO2 between the N7 and N8 nitrogen atoms of 7,8-diaminopelargonic acid (DAPA, also called 7,8-diammoniononanoate) to form a ureido ring. The sequence is that of ATP-dependent dethiobiotin synthetase BioD from Janthinobacterium sp. (strain Marseille) (Minibacterium massiliensis).